The following is a 643-amino-acid chain: Chromosomal replication initiator protein DnaA (643 aa).

Positions 1–97 are domain I, interacts with DnaA modulators; that stretch reads MADVPADLAA…VDDSAGEPPP (97 aa). Residues 87 to 303 form a disordered region; sequence TVDDSAGEPP…ASGPGEPTAR (217 aa). The tract at residues 97 to 302 is domain II; sequence PAAPPAQQTP…PASGPGEPTA (206 aa). The span at 195 to 209 shows a compositional bias: polar residues; it reads SPSSQDAYGSPSQDY. A compositionally biased stretch (basic and acidic residues) spans 222-269; it reads QRGDYDTPRAEYEPARPDYDSARPDYESARPEYDQRDPVRRELPEPPA. Residues 291 to 300 are compositionally biased toward low complexity; it reads PAPASGPGEP. Residues 303 to 519 are domain III, AAA+ region; the sequence is RLNPKYLFDT…GALIRVTAFA (217 aa). Residues Gly347, Gly349, Lys350, and Thr351 each coordinate ATP. Residues 520–643 form a domain IV, binds dsDNA region; that stretch reads SLNRQPVDLG…TELTNRIKNG (124 aa).

This sequence belongs to the DnaA family. In terms of assembly, oligomerizes as a right-handed, spiral filament on DNA at oriC.

Its subcellular location is the cytoplasm. Its function is as follows. Plays an essential role in the initiation and regulation of chromosomal replication. ATP-DnaA binds to the origin of replication (oriC) to initiate formation of the DNA replication initiation complex once per cell cycle. Binds the DnaA box (a 9 base pair repeat at the origin) and separates the double-stranded (ds)DNA. Forms a right-handed helical filament on oriC DNA; dsDNA binds to the exterior of the filament while single-stranded (ss)DNA is stabiized in the filament's interior. The ATP-DnaA-oriC complex binds and stabilizes one strand of the AT-rich DNA unwinding element (DUE), permitting loading of DNA polymerase. After initiation quickly degrades to an ADP-DnaA complex that is not apt for DNA replication. Binds acidic phospholipids. This is Chromosomal replication initiator protein DnaA from Streptomyces reticuli.